The primary structure comprises 560 residues: Dihydroxy-acid dehydratase (560 aa).

Mg(2+) is bound at residue Asp80. [2Fe-2S] cluster is bound at residue Cys121. Positions 122 and 123 each coordinate Mg(2+). At Lys123 the chain carries N6-carboxylysine. Cys194 provides a ligand contact to [2Fe-2S] cluster. Glu447 is a binding site for Mg(2+). Catalysis depends on Ser473, which acts as the Proton acceptor.

Belongs to the IlvD/Edd family. In terms of assembly, homodimer. [2Fe-2S] cluster is required as a cofactor. The cofactor is Mg(2+).

It carries out the reaction (2R)-2,3-dihydroxy-3-methylbutanoate = 3-methyl-2-oxobutanoate + H2O. The enzyme catalyses (2R,3R)-2,3-dihydroxy-3-methylpentanoate = (S)-3-methyl-2-oxopentanoate + H2O. The protein operates within amino-acid biosynthesis; L-isoleucine biosynthesis; L-isoleucine from 2-oxobutanoate: step 3/4. It participates in amino-acid biosynthesis; L-valine biosynthesis; L-valine from pyruvate: step 3/4. Its function is as follows. Functions in the biosynthesis of branched-chain amino acids. Catalyzes the dehydration of (2R,3R)-2,3-dihydroxy-3-methylpentanoate (2,3-dihydroxy-3-methylvalerate) into 2-oxo-3-methylpentanoate (2-oxo-3-methylvalerate) and of (2R)-2,3-dihydroxy-3-methylbutanoate (2,3-dihydroxyisovalerate) into 2-oxo-3-methylbutanoate (2-oxoisovalerate), the penultimate precursor to L-isoleucine and L-valine, respectively. The polypeptide is Dihydroxy-acid dehydratase (Chloroherpeton thalassium (strain ATCC 35110 / GB-78)).